The sequence spans 203 residues: Formate hydrogenlyase subunit 2 (203 aa).

4Fe-4S ferredoxin-type domains are found at residues 2-32 (NRFVIADSTLCIGCHTCEAACSETHRQHGLQ), 42-72 (NEKESAPQLCHHCEDAPCAVVCPVNAITRVD), 73-102 (GAVQLNESLCVSCKLCGIACPFGAIEFSGS), and 137-169 (RAIAVKCDLCSFDEQGPACVRMCPTKALHLVDN). 16 residues coordinate [4Fe-4S] cluster: cysteine 12, cysteine 15, cysteine 18, cysteine 22, cysteine 51, cysteine 54, cysteine 59, cysteine 63, cysteine 82, cysteine 85, cysteine 88, cysteine 92, cysteine 143, cysteine 146, cysteine 155, and cysteine 159.

FHL comprises of a formate dehydrogenase, unidentified electron carriers and a hydrogenase (isoenzyme 3). In this non-energy conserving pathway, molecular hydrogen and carbodioxide are released from formate. [4Fe-4S] cluster is required as a cofactor.

In terms of biological role, probable electron transfer protein for hydrogenase 3. This Escherichia coli (strain K12) protein is Formate hydrogenlyase subunit 2 (hycB).